Reading from the N-terminus, the 187-residue chain is UPF0232 protein MMAR_0004 (187 aa).

Disordered regions lie at residues 1-77 and 166-187; these read MSDD…QPLG and ASPSWRKGPRHIAGRGPRDTYG. Positions 14-30 are enriched in basic and acidic residues; that stretch reads AARDELSGMDLVRRTLA. Low complexity predominate over residues 31–55; it reads EARAAARARGQDPGRGFAAGPAPRR.

It belongs to the UPF0232 family.

In Mycobacterium marinum (strain ATCC BAA-535 / M), this protein is UPF0232 protein MMAR_0004.